A 263-amino-acid chain; its full sequence is MARGPKKHLKRVAAPKHWMLDKLTGVFAPRPSTGPHKLRECLPLIIFLRNRLKYALTGDEVKKICMQRFIKVDGKVRTDITYPAGFMDVISIEKTGENFRLIYDVKGRFTVHRITNEEAKYKLCKVKKILIGTKGIPHLVTHDARTIRYPDPMIKANDTVRIDLETGKITEFIKFDTGNLCMVTGGANLGRIGVITNRERHPGSFDVVHVKDSTGNSFATRLSNIFVIGKGNKAWVSIPRGKGIRLTIAEERDKRLAAKQSSS.

One can recognise an S4 RNA-binding domain in the interval 42–104; that stretch reads LPLIIFLRNR…TGENFRLIYD (63 aa).

This sequence belongs to the eukaryotic ribosomal protein eS4 family.

The sequence is that of Small ribosomal subunit protein eS4 (rps4) from Ictalurus punctatus (Channel catfish).